Consider the following 495-residue polypeptide: UDP-N-acetylmuramoyl-L-alanyl-D-glutamate--2,6-diaminopimelate ligase (495 aa).

UDP-N-acetyl-alpha-D-muramoyl-L-alanyl-D-glutamate-binding positions include Leu27, Ser29, and 44–46; that span reads HQA. An ATP-binding site is contributed by 116-122; it reads GTNGKTT. Residues Asn157, 158–159, Ser185, Gln191, and Arg193 contribute to the UDP-N-acetyl-alpha-D-muramoyl-L-alanyl-D-glutamate site; that span reads TT. Lys225 carries the N6-carboxylysine modification. Meso-2,6-diaminopimelate contacts are provided by residues Arg390, 414–417, Gly465, and Glu469; that span reads DNPR. Residues 414–417 carry the Meso-diaminopimelate recognition motif motif; sequence DNPR.

Belongs to the MurCDEF family. MurE subfamily. The cofactor is Mg(2+). Carboxylation is probably crucial for Mg(2+) binding and, consequently, for the gamma-phosphate positioning of ATP.

The protein resides in the cytoplasm. It carries out the reaction UDP-N-acetyl-alpha-D-muramoyl-L-alanyl-D-glutamate + meso-2,6-diaminopimelate + ATP = UDP-N-acetyl-alpha-D-muramoyl-L-alanyl-gamma-D-glutamyl-meso-2,6-diaminopimelate + ADP + phosphate + H(+). Its pathway is cell wall biogenesis; peptidoglycan biosynthesis. In terms of biological role, catalyzes the addition of meso-diaminopimelic acid to the nucleotide precursor UDP-N-acetylmuramoyl-L-alanyl-D-glutamate (UMAG) in the biosynthesis of bacterial cell-wall peptidoglycan. The protein is UDP-N-acetylmuramoyl-L-alanyl-D-glutamate--2,6-diaminopimelate ligase of Salmonella choleraesuis (strain SC-B67).